The primary structure comprises 771 residues: Hyperosmolality-gated Ca2+ permeable channel 1.2 (771 aa).

The Extracellular segment spans residues 1–4 (MATL). Residues 5-27 (QDIGVSAGINILSAFVFFIIFAV) traverse the membrane as a helical segment. Over 28 to 100 (LRLQPFNDRV…AGLDSVVYLR (73 aa)) the chain is Cytoplasmic. Residues 101–125 (IYWLGLKIFTPIAVLAWAVLVPVNW) form a helical membrane-spanning segment. The Extracellular segment spans residues 126–156 (TNNTLEMAKQLRNVTSSDIDKLSVSNIPEYS). A helical transmembrane segment spans residues 157 to 178 (MRFWTHIVMAYAFTIWTCYVLM). Residues 179-374 (KEYETIANMR…AIPYVSLTVR (196 aa)) are Cytoplasmic-facing. Residues 375 to 401 (RLIMHVAFFFLTFFFIVPIAFVQSLAT) traverse the membrane as a helical segment. Over 402–419 (IEGIVKAAPFLKFIVDDK) the chain is Extracellular. The chain crosses the membrane as a helical span at residues 420 to 445 (FMKSVIQGFLPGIALKLFLAFLPSIL). Over 446 to 462 (MIMSKFEGFTSISSLER) the chain is Cytoplasmic. Residues 463–485 (RAAFRYYIFNLVNVFLASVIAGA) traverse the membrane as a helical segment. Over 486–504 (AFEQLNSFLNQSANQIPKT) the chain is Extracellular. The chain crosses the membrane as a helical span at residues 505–533 (IGVAIPMKATFFITYIMVDGWAGVAGEIL). Topologically, residues 534 to 566 (MLKPLIMFHLKNAFLVKTDKDREEAMDPGSIGF) are cytoplasmic. A helical transmembrane segment spans residues 567 to 588 (NTGEPRIQLYFLLGLVYAPVTP). A topological domain (extracellular) is located at residue Met-589. Residues 590-605 (LLPFILVFFALAYIVY) form a helical membrane-spanning segment. At 606–625 (RHQIINVYNQEYESAAAFWP) the chain is on the cytoplasmic side. The helical transmembrane segment at 626 to 648 (DVHGRVIAALVISQLLLMGLLGT) threads the bilayer. At 649–651 (KHA) the chain is on the extracellular side. A helical transmembrane segment spans residues 652 to 670 (ALAAPFLIALPVLTIGFHH). At 671 to 771 (FCKGRYEPAF…PSLPFSGKLV (101 aa)) the chain is on the cytoplasmic side. Residues 741-771 (PTKRQSRRNTPAPSIISGDDSPSLPFSGKLV) are disordered.

Belongs to the CSC1 (TC 1.A.17) family. As to quaternary structure, homodimer.

The protein resides in the membrane. With respect to regulation, activated by hyperosmotic shock after mannitol or NaCl treatment. Activated by mechanical pressure: activated in response to membrane stretch and poke. Membrane lipids play a key role in mechanosensation by acting as a wall mainly formed by lipid head groups. Its function is as follows. Acts as an osmosensitive calcium-permeable cation channel. Specifically conducts cations including Ca(2+), K(+) and Na(+) in vitro. Inactivation or closure of the channel is calcium-dependent. Mechanosensitive ion channel that converts mechanical stimuli into a flow of ions: activated in response to membrane stretch and poke. The chain is Hyperosmolality-gated Ca2+ permeable channel 1.2 from Arabidopsis thaliana (Mouse-ear cress).